Consider the following 286-residue polypeptide: ATP synthase gamma chain (286 aa).

Belongs to the ATPase gamma chain family. As to quaternary structure, F-type ATPases have 2 components, CF(1) - the catalytic core - and CF(0) - the membrane proton channel. CF(1) has five subunits: alpha(3), beta(3), gamma(1), delta(1), epsilon(1). CF(0) has three main subunits: a, b and c.

The protein localises to the cell inner membrane. In terms of biological role, produces ATP from ADP in the presence of a proton gradient across the membrane. The gamma chain is believed to be important in regulating ATPase activity and the flow of protons through the CF(0) complex. This chain is ATP synthase gamma chain, found in Pseudomonas syringae pv. tomato (strain ATCC BAA-871 / DC3000).